Reading from the N-terminus, the 566-residue chain is MKSKSIMAASTVMELALAQASADPLCSTIINLQPIEYQFQQPVLIDSYFPANTDIVLDDGHVVHVTNAPTSLSTVLTDVSTSSTTLTSSASNGNGNPPDGGYLTFTVPANPDDIGNHPVTKTYPPTEPGQPGIVVIQVPTSPPGADGIPTSSVPYVTVTTTGDFPSLTGPVTTTVTPGEPGATGSVIIEVPNTKITSPSASYVTVTTPGSVAPTDAPRTSTIPPSNPTDPGTVIVVVPSSQASSVSSIPFVTVTTTGSTLNPTDDPITSTISPSGSTGSGTVIVEVPPSSSPSGSGASSSPVSVVTRTVTGDDGNGEPSTTTITPTASSGPGTVIVEVPPPTNSPSATSPGSSRPGGPGSSGTGSSASQGPSDSAALSSSTGDAGPSSSVPETSSPSRATTDDAASSTSASAPASSSAASSITQSETPSSAGAETSTPATSPASSSAPSTSDADTSSPVNPTTSSPASSAATSAPGSSTESAPSSSTSSAAANFDPCPDSLYGNPQCCSVDVLGVADVECDSPTESPTDADNFQAICAASGQRARCCVLPVLGQALVCLTPVGVSN.

The N-terminal stretch at 1–22 is a signal peptide; that stretch reads MKSKSIMAASTVMELALAQASA. 4 cysteine pairs are disulfide-bonded: C497–C546, C507–C537, C508–C520, and C547–C558.

Belongs to the cerato-ulmin hydrophobin family. As to quaternary structure, homodimer. Homodimers further self-assemble to form highly ordered films at water-air interfaces through intermolecular interactions.

It is found in the secreted. The protein localises to the cell wall. In terms of biological role, aerial growth, conidiation, and dispersal of filamentous fungi in the environment rely upon a capability of their secreting small amphipathic proteins called hydrophobins (HPBs) with low sequence identity. Class I can self-assemble into an outermost layer of rodlet bundles on aerial cell surfaces, conferring cellular hydrophobicity that supports fungal growth, development and dispersal; whereas Class II form highly ordered films at water-air interfaces through intermolecular interactions but contribute nothing to the rodlet structure. FOXG_02748 is a class II hydrophobin that is likely required for plant colonization. This Fusarium oxysporum f. sp. lycopersici (strain 4287 / CBS 123668 / FGSC 9935 / NRRL 34936) (Fusarium vascular wilt of tomato) protein is Class II hydrophobin FOXG_02748.